The sequence spans 274 residues: Pyrroline-5-carboxylate reductase 3 (274 aa).

N-acetylalanine is present on Ala2.

The protein belongs to the pyrroline-5-carboxylate reductase family. Homodecamer; composed of 5 homodimers.

Its subcellular location is the cytoplasm. It catalyses the reaction L-proline + NADP(+) = (S)-1-pyrroline-5-carboxylate + NADPH + 2 H(+). The enzyme catalyses L-proline + NAD(+) = (S)-1-pyrroline-5-carboxylate + NADH + 2 H(+). The protein operates within amino-acid biosynthesis; L-proline biosynthesis; L-proline from L-glutamate 5-semialdehyde: step 1/1. Functionally, oxidoreductase that catalyzes the last step in proline biosynthesis, which corresponds to the reduction of pyrroline-5-carboxylate (P5C) to L-proline using NAD(P)H. Proline is synthesized from either glutamate or ornithine; both are converted to P5C, and then to proline via pyrroline-5-carboxylate reductases (PYCRs). PYCR3 is exclusively linked to the biosynthesis of proline from ornithine. The protein is Pyrroline-5-carboxylate reductase 3 of Mus musculus (Mouse).